Consider the following 246-residue polypeptide: MIAKTTNLNLFYGKKQALFDINMQIEQNKITALIGASGCGKSTFLRCFNRMNDKIAKIDGLVEIKGKDVKNQDVVALRKNVGMVFQQPNVFVKSIYENISYAPKLHGMIKNKDEEEALVVDCLQKVGLFEEVKDKLKQNALALSGGQQQRLCIARALAIKPKLLLLDEPTSALDPISSGVIEELLKELSHNLSMIMVTHNMQQGKRVADYTAFFHLGELIEFGESKEFFENPKQEKTKAYLSGAFG.

The region spanning 3–241 (AKTTNLNLFY…PKQEKTKAYL (239 aa)) is the ABC transporter domain. An ATP-binding site is contributed by 35-42 (GASGCGKS).

Belongs to the ABC transporter superfamily. Phosphate importer (TC 3.A.1.7) family. In terms of assembly, the complex is composed of two ATP-binding proteins (PstB), two transmembrane proteins (PstC and PstA) and a solute-binding protein (PstS).

Its subcellular location is the cell inner membrane. It catalyses the reaction phosphate(out) + ATP + H2O = ADP + 2 phosphate(in) + H(+). In terms of biological role, part of the ABC transporter complex PstSACB involved in phosphate import. Responsible for energy coupling to the transport system. This chain is Phosphate import ATP-binding protein PstB, found in Campylobacter jejuni subsp. jejuni serotype O:2 (strain ATCC 700819 / NCTC 11168).